Reading from the N-terminus, the 212-residue chain is Phosphatidylserine decarboxylase proenzyme (212 aa).

Ser182 functions as the Schiff-base intermediate with substrate; via pyruvic acid in the catalytic mechanism. At Ser182 the chain carries Pyruvic acid (Ser); by autocatalysis.

Belongs to the phosphatidylserine decarboxylase family. PSD-A subfamily. In terms of assembly, heterodimer of a large membrane-associated beta subunit and a small pyruvoyl-containing alpha subunit. It depends on pyruvate as a cofactor. In terms of processing, is synthesized initially as an inactive proenzyme. Formation of the active enzyme involves a self-maturation process in which the active site pyruvoyl group is generated from an internal serine residue via an autocatalytic post-translational modification. Two non-identical subunits are generated from the proenzyme in this reaction, and the pyruvate is formed at the N-terminus of the alpha chain, which is derived from the carboxyl end of the proenzyme. The post-translation cleavage follows an unusual pathway, termed non-hydrolytic serinolysis, in which the side chain hydroxyl group of the serine supplies its oxygen atom to form the C-terminus of the beta chain, while the remainder of the serine residue undergoes an oxidative deamination to produce ammonia and the pyruvoyl prosthetic group on the alpha chain.

The protein resides in the cell membrane. The enzyme catalyses a 1,2-diacyl-sn-glycero-3-phospho-L-serine + H(+) = a 1,2-diacyl-sn-glycero-3-phosphoethanolamine + CO2. Its pathway is phospholipid metabolism; phosphatidylethanolamine biosynthesis; phosphatidylethanolamine from CDP-diacylglycerol: step 2/2. Functionally, catalyzes the formation of phosphatidylethanolamine (PtdEtn) from phosphatidylserine (PtdSer). This Paraburkholderia phymatum (strain DSM 17167 / CIP 108236 / LMG 21445 / STM815) (Burkholderia phymatum) protein is Phosphatidylserine decarboxylase proenzyme.